A 352-amino-acid polypeptide reads, in one-letter code: uncharacterized protein (352 aa).

The first 21 residues, 1-21 (MNVDSRVFRFFLVFLILVVVA), serve as a signal peptide directing secretion.

Belongs to the bacterial solute-binding protein 1 family. WtpA subfamily.

This is an uncharacterized protein from Methanosarcina acetivorans (strain ATCC 35395 / DSM 2834 / JCM 12185 / C2A).